A 445-amino-acid polypeptide reads, in one-letter code: MGDPRTGAPLDDGGGWTGSEEGSEEGTGGSEGVGGDGSPDAEGVWSPDIEQSFQEALAIYPPCGRRKIILSDEGKMYGRNELIARYIKLRTGKTRTRKQVSSHIQVLARRKSREIQSKLKDQVSKDKAFQTMATMSSAQLISAPSLQAKLGPSGPQATELFQFWSGSSGPPWNVPDVKPFSQAPFSVSLTPPASDLPGYEPPPALSPLPPPAPSPPAWQARALGTARLQLIEFSAFVEPPDAVDSFQRHLFVHISQQCPSPGAPPLESVDVRQIYDKFPEKKGGLRELYDRGPPHAFFLVKFWADLNWGPSAEEAGSSGGGGGFYGVSSQYESRELMTLTCSSKVCSFGKQVVEKVETERAQLEDGRFVYRLLRSPMCEYLVNFLHKLRQLPERYMMNSVLENFTILQVVTNRDTQELLLCTAYVFEVSTSERGAQYHIYRLVRD.

Disordered stretches follow at residues 1–47 (MGDP…VWSP) and 191–217 (PPASDLPGYEPPPALSPLPPPAPSPPA). Positions 25-37 (EGTGGSEGVGGDG) are enriched in gly residues. The TEA DNA-binding region spans 38-114 (SPDAEGVWSP…QVLARRKSRE (77 aa)). A transcriptional activation region spans residues 172 to 445 (WNVPDVKPFS…QYHIYRLVRD (274 aa)). Positions 199-216 (YEPPPALSPLPPPAPSPP) are enriched in pro residues.

As to quaternary structure, interacts with YAP1 and WWTR1/TAZ. Highest expression in brain. High levels also found in lung, testis and ovarian follicle cells. Lower levels in heart and spleen.

Its subcellular location is the nucleus. Functionally, transcription factor which plays a key role in the Hippo signaling pathway, a pathway involved in organ size control and tumor suppression by restricting proliferation and promoting apoptosis. The core of this pathway is composed of a kinase cascade wherein MST1/MST2, in complex with its regulatory protein SAV1, phosphorylates and activates LATS1/2 in complex with its regulatory protein MOB1, which in turn phosphorylates and inactivates YAP1 oncoprotein and WWTR1/TAZ. Acts by mediating gene expression of YAP1 and WWTR1/TAZ, thereby regulating cell proliferation, migration and epithelial mesenchymal transition (EMT) induction. Binds to the SPH and GT-IIC 'enhansons' (5'-GTGGAATGT-3'). May be involved in the gene regulation of neural development. Binds to the M-CAT motif. The chain is Transcriptional enhancer factor TEF-4 (Tead2) from Mus musculus (Mouse).